Reading from the N-terminus, the 74-residue chain is Omega-conotoxin-like protein 1 (74 aa).

Residues 1–20 (MSKFILLVCILLLTTNIVSA) form the signal peptide. Intrachain disulfides connect Cys24–Cys38, Cys31–Cys43, and Cys37–Cys50.

In terms of tissue distribution, highly expressed in brain. Is also found in hemolymph.

Its function is as follows. The impact of this protein on the neuronal activity of the honeybee brain is not known. It does not affect apparent movement or hatching of blowfly larvae. However, when injected into fish, it induces a strong reversible paralytic effect. In addition, the presence of this small peptide in the hemolymph of adult drones together with its induction after bacterial infection suggests that this peptide exhibits antibacterial activity. This peptide may act by inhibiting ion channels. The polypeptide is Omega-conotoxin-like protein 1 (Apis mellifera (Honeybee)).